Here is a 316-residue protein sequence, read N- to C-terminus: Apolipoprotein E (316 aa).

Residues 1 to 18 (MKALWAVLVVTLLAGCLA) form the signal peptide. 8 tandem repeats follow at residues 76 to 97 (VLMEDTMTELKAYKKELEEQMG), 98 to 119 (PMAEETRARLAKEVQAAQSRLG), 120 to 141 (ADMEDLRNRLGLYRNEVQTMLG), 142 to 163 (QSTEELRARLTTHLRKLRKRLM), 164 to 185 (RDAEDLQKRLAVYKAGAREGAE), 186 to 207 (RGVGAIRERLGPLVEQGRQRTA), 208 to 229 (NLGAGAAQPLRERAQALGARIR), and 230 to 251 (GRLEEVGNQARDRLEEVREQME). The tract at residues 76-251 (VLMEDTMTEL…RLEEVREQME (176 aa)) is 8 X 22 AA approximate tandem repeats. M139 is subject to Methionine sulfoxide. S143 bears the Phosphoserine mark. Positions 154–164 (HLRKLRKRLMR) are LDL and other lipoprotein receptors binding. 158–161 (LRKR) contacts heparin. A lipid-binding and lipoprotein association region spans residues 206–286 (TANLGAGAAQ…GWFEPLVEDM (81 aa)). 225–232 (GARIRGRL) serves as a coordination point for heparin. The tract at residues 262–316 (QQMRLQAEIFQTRLKGWFEPLVEDMQRQWANLMEKIQASVATNPIPPSSVPQESQ) is homooligomerization. The specificity for association with VLDL stretch occupies residues 274 to 286 (RLKGWFEPLVEDM).

It belongs to the apolipoprotein A1/A4/E family. As to quaternary structure, homotetramer. May interact with ABCA1; functionally associated with ABCA1 in the biogenesis of HDLs. May interact with APP/A4 amyloid-beta peptide; the interaction is extremely stable in vitro but its physiological significance is unclear. May interact with MAPT. May interact with MAP2. In the cerebrospinal fluid, interacts with secreted SORL1. Interacts with PMEL; this allows the loading of PMEL luminal fragment on ILVs to induce fibril nucleation. Post-translationally, APOE exists as multiple glycosylated and sialylated glycoforms within cells and in plasma. The extent of glycosylation and sialylation are tissue and context specific. In terms of processing, glycated in plasma VLDL. Phosphorylated by FAM20C in the extracellular medium.

The protein localises to the secreted. It is found in the extracellular space. Its subcellular location is the extracellular matrix. The protein resides in the extracellular vesicle. It localises to the endosome. The protein localises to the multivesicular body. Functionally, APOE is an apolipoprotein, a protein associating with lipid particles, that mainly functions in lipoprotein-mediated lipid transport between organs via the plasma and interstitial fluids. APOE is a core component of plasma lipoproteins and is involved in their production, conversion and clearance. Apolipoproteins are amphipathic molecules that interact both with lipids of the lipoprotein particle core and the aqueous environment of the plasma. As such, APOE associates with chylomicrons, chylomicron remnants, very low density lipoproteins (VLDL) and intermediate density lipoproteins (IDL) but shows a preferential binding to high-density lipoproteins (HDL). It also binds a wide range of cellular receptors including the LDL receptor/LDLR, the LDL receptor-related proteins LRP1, LRP2 and LRP8 and the very low-density lipoprotein receptor/VLDLR that mediate the cellular uptake of the APOE-containing lipoprotein particles. Finally, APOE also has a heparin-binding activity and binds heparan-sulfate proteoglycans on the surface of cells, a property that supports the capture and the receptor-mediated uptake of APOE-containing lipoproteins by cells. A main function of APOE is to mediate lipoprotein clearance through the uptake of chylomicrons, VLDLs, and HDLs by hepatocytes. APOE is also involved in the biosynthesis by the liver of VLDLs as well as their uptake by peripheral tissues ensuring the delivery of triglycerides and energy storage in muscle, heart and adipose tissues. By participating in the lipoprotein-mediated distribution of lipids among tissues, APOE plays a critical role in plasma and tissues lipid homeostasis. APOE is also involved in two steps of reverse cholesterol transport, the HDLs-mediated transport of cholesterol from peripheral tissues to the liver, and thereby plays an important role in cholesterol homeostasis. First, it is functionally associated with ABCA1 in the biogenesis of HDLs in tissues. Second, it is enriched in circulating HDLs and mediates their uptake by hepatocytes. APOE also plays an important role in lipid transport in the central nervous system, regulating neuron survival and sprouting. This chain is Apolipoprotein E (APOE), found in Microtus ochrogaster (Prairie vole).